An 89-amino-acid chain; its full sequence is Small ribosomal subunit protein uS15 (89 aa).

This sequence belongs to the universal ribosomal protein uS15 family. In terms of assembly, part of the 30S ribosomal subunit. Forms a bridge to the 50S subunit in the 70S ribosome, contacting the 23S rRNA.

Functionally, one of the primary rRNA binding proteins, it binds directly to 16S rRNA where it helps nucleate assembly of the platform of the 30S subunit by binding and bridging several RNA helices of the 16S rRNA. Forms an intersubunit bridge (bridge B4) with the 23S rRNA of the 50S subunit in the ribosome. This is Small ribosomal subunit protein uS15 from Ruegeria sp. (strain TM1040) (Silicibacter sp.).